The following is a 430-amino-acid chain: Transcription factor iws-1 (430 aa).

The segment covering 1-14 (MSDAASPAGSPAAE) has biased composition (low complexity). The interval 1–153 (MSDAASPAGS…EENLTPDERR (153 aa)) is disordered. Residues 15-33 (PTEHRDEDQVNETHQDDGS) show a composition bias toward basic and acidic residues. The segment covering 52 to 63 (VLSEIDENEFGD) has biased composition (acidic residues). Residues 95–104 (KEGRRPKKRS) show a composition bias toward basic residues. A compositionally biased stretch (basic and acidic residues) spans 124 to 137 (VRAEGERRARKEVE). The TFIIS N-terminal domain maps to 244-321 (QSVRYFLEPL…GEWSRLILKR (78 aa)). The segment at 402–430 (GQAPTDHRPIGHSGHEAFRRMTQKGKGKR) is disordered. Residues 406–420 (TDHRPIGHSGHEAFR) show a composition bias toward basic and acidic residues.

This sequence belongs to the IWS1 family.

The protein localises to the nucleus. Functionally, transcription factor involved in RNA polymerase II transcription regulation. May function in both SPT15/TBP post-recruitment and recruitment steps of transcription. In Neurospora crassa (strain ATCC 24698 / 74-OR23-1A / CBS 708.71 / DSM 1257 / FGSC 987), this protein is Transcription factor iws-1 (iws-1).